The following is a 1072-amino-acid chain: Integrin alpha-6 (1072 aa).

The N-terminal stretch at 1 to 18 is a signal peptide; that stretch reads MAAALLLYLPLLPGLAGA. The Extracellular portion of the chain corresponds to 19 to 1010; the sequence is FNLDAENVIG…FPAKPVALYT (992 aa). FG-GAP repeat units lie at residues 23 to 88, 94 to 160, 170 to 223, 238 to 295, 296 to 357, 358 to 413, and 414 to 476; these read AENV…DTRC, DEDT…IKDD, DGRL…FYDL, RQDK…QRAL, SLEH…KWEG, IKPI…GINT, and EPAQ…VQPD. Asparagine 71 carries N-linked (GlcNAc...) asparagine glycosylation. Cystine bridges form between cysteine 79-cysteine 88, cysteine 125-cysteine 148, and cysteine 169-cysteine 182. 2 N-linked (GlcNAc...) asparagine glycosylation sites follow: asparagine 217 and asparagine 278. Ca(2+) is bound by residues aspartate 318, asparagine 320, aspartate 322, and aspartate 326. Residue asparagine 364 is glycosylated (N-linked (GlcNAc...) asparagine). Aspartate 380, asparagine 382, aspartate 384, tyrosine 386, aspartate 388, aspartate 438, aspartate 440, asparagine 442, tyrosine 444, and aspartate 446 together coordinate Ca(2+). Cysteine 498 and cysteine 557 are disulfide-bonded. 2 N-linked (GlcNAc...) asparagine glycosylation sites follow: asparagine 515 and asparagine 609. Intrachain disulfides connect cysteine 625–cysteine 631 and cysteine 725–cysteine 736. Asparagine 730, asparagine 747, and asparagine 780 each carry an N-linked (GlcNAc...) asparagine glycan. 2 disulfide bridges follow: cysteine 880/cysteine 927 and cysteine 933/cysteine 938. A glycan (N-linked (GlcNAc...) asparagine) is linked at asparagine 957. A helical transmembrane segment spans residues 1011 to 1036; that stretch reads GVPWWIIAVAIFAGVLMLALLVFLLW. The Cytoplasmic segment spans residues 1037-1072; that stretch reads KCGFFKRSKKDHYDATYHKAEIHAQPSDKERLTSDA. The S-palmitoyl cysteine; by DHHC3 moiety is linked to residue cysteine 1038. The GFFKR motif signature appears at 1039 to 1043; that stretch reads GFFKR. A Phosphoserine; by CaMK2 modification is found at serine 1070.

Belongs to the integrin alpha chain family. Heterodimer of an alpha and a beta subunit. The alpha subunit is composed of a heavy and a light chain linked by a disulfide bond. Alpha-6 associates with either beta-1 (ITGB1) or beta-4 (ITGB4) to form ITGA6:ITGB1 and ITGA6:ITGB4, respectively. In terms of processing, phosphorylated in vivo.

The protein localises to the cell membrane. In terms of biological role, integrin alpha-6/beta-1 (ITGA6:ITGB1) is a receptor for laminin on platelets. Integrin alpha-6/beta-1 (ITGA6:ITGB1) is present in oocytes and is involved in sperm-egg fusion. Integrin alpha-6/beta-4 (ITGA6:ITGB4) is a receptor for laminin in epithelial cells and it plays a critical structural role in the hemidesmosome. This is Integrin alpha-6 (ITGA6) from Gallus gallus (Chicken).